Consider the following 74-residue polypeptide: Putative defensin-like protein 186 (74 aa).

A signal peptide spans 1–22 (MKNSSIILVLVFFFFISSSGEA). 4 disulfides stabilise this stretch: Cys25–Cys74, Cys31–Cys51, Cys37–Cys68, and Cys41–Cys70.

Belongs to the DEFL family.

Its subcellular location is the secreted. The polypeptide is Putative defensin-like protein 186 (LCR40) (Arabidopsis thaliana (Mouse-ear cress)).